The primary structure comprises 286 residues: ATP synthase gamma chain (286 aa).

The protein belongs to the ATPase gamma chain family. In terms of assembly, F-type ATPases have 2 components, CF(1) - the catalytic core - and CF(0) - the membrane proton channel. CF(1) has five subunits: alpha(3), beta(3), gamma(1), delta(1), epsilon(1). CF(0) has three main subunits: a, b and c.

It localises to the cell inner membrane. Its function is as follows. Produces ATP from ADP in the presence of a proton gradient across the membrane. The gamma chain is believed to be important in regulating ATPase activity and the flow of protons through the CF(0) complex. In Shewanella pealeana (strain ATCC 700345 / ANG-SQ1), this protein is ATP synthase gamma chain.